Here is a 170-residue protein sequence, read N- to C-terminus: MPTSWKDSGLRWYWIVVLVFIADQLSKQWVLSSFELYESVKLLPMFNFTYVRNYGAAFSFLSDAGGWQRWLFTFVAVGFSILLSVWLRQQSTKMWRLNLAYTLVIGGALGNLIDRLQHGFVVDFLDFYWKTSHFPAFNIADSAICIGAGLIILDSFVSGKDVKKSDDIKE.

3 helical membrane-spanning segments follow: residues 12-32, 67-87, and 94-113; these read WYWI…WVLS, WQRW…SVWL, and MWRL…GNLI. Residues Asp-123 and Asp-141 contribute to the active site. Residues 133–153 form a helical membrane-spanning segment; sequence HFPAFNIADSAICIGAGLIIL.

This sequence belongs to the peptidase A8 family.

It is found in the cell inner membrane. The enzyme catalyses Release of signal peptides from bacterial membrane prolipoproteins. Hydrolyzes -Xaa-Yaa-Zaa-|-(S,diacylglyceryl)Cys-, in which Xaa is hydrophobic (preferably Leu), and Yaa (Ala or Ser) and Zaa (Gly or Ala) have small, neutral side chains.. It functions in the pathway protein modification; lipoprotein biosynthesis (signal peptide cleavage). This protein specifically catalyzes the removal of signal peptides from prolipoproteins. The sequence is that of Lipoprotein signal peptidase from Shewanella piezotolerans (strain WP3 / JCM 13877).